A 228-amino-acid polypeptide reads, in one-letter code: Acyl-protein thioesterase 1 (228 aa).

Residues Ser-119, Asp-174, and His-208 each act as charge relay system in the active site.

It belongs to the AB hydrolase superfamily. AB hydrolase 2 family.

Its subcellular location is the cytoplasm. It localises to the nucleus. The catalysed reaction is S-hexadecanoyl-L-cysteinyl-[protein] + H2O = L-cysteinyl-[protein] + hexadecanoate + H(+). Functionally, hydrolyzes fatty acids from S-acylated cysteine residues in proteins with a strong preference for palmitoylated G-alpha proteins over other acyl substrates. Mediates the deacylation of G-alpha proteins such as GPA1 in vivo, but has weak or no activity toward palmitoylated Ras proteins. Has weak lysophospholipase activity in vitro; however such activity may not exist in vivo. This Kluyveromyces lactis (strain ATCC 8585 / CBS 2359 / DSM 70799 / NBRC 1267 / NRRL Y-1140 / WM37) (Yeast) protein is Acyl-protein thioesterase 1.